Consider the following 123-residue polypeptide: Large-conductance mechanosensitive channel (123 aa).

2 helical membrane passes run 14–34 and 67–87; these read VIDM…VKSL and GSFL…FLMV.

Belongs to the MscL family. In terms of assembly, homopentamer.

Its subcellular location is the cell membrane. Functionally, channel that opens in response to stretch forces in the membrane lipid bilayer. May participate in the regulation of osmotic pressure changes within the cell. This is Large-conductance mechanosensitive channel from Limosilactobacillus reuteri (strain DSM 20016) (Lactobacillus reuteri).